Reading from the N-terminus, the 117-residue chain is Hainantoxin-XV.2 (117 aa).

The N-terminal stretch at methionine 1 to serine 20 is a signal peptide. The interval alanine 18 to glutamate 55 is disordered. Positions serine 21–arginine 56 are excised as a propeptide. Residues asparagine 23–glutamate 55 show a composition bias toward basic and acidic residues. 4 disulfides stabilise this stretch: cysteine 58–cysteine 72, cysteine 65–cysteine 78, cysteine 69–cysteine 115, and cysteine 71–cysteine 91.

This sequence belongs to the neurotoxin 03 (Tx2) family. 02 subfamily. HNTX-XV sub-subfamily. In terms of tissue distribution, expressed by the venom gland.

Its subcellular location is the secreted. Functionally, putative ion channel inhibitor. This chain is Hainantoxin-XV.2, found in Cyriopagopus hainanus (Chinese bird spider).